A 404-amino-acid polypeptide reads, in one-letter code: Deoxyguanosinetriphosphate triphosphohydrolase-like protein 1 (404 aa).

Residues 75 to 219 (RLTHSIEVAQ…AAIADDIAYN (145 aa)) enclose the HD domain.

This sequence belongs to the dGTPase family. Type 2 subfamily.

The chain is Deoxyguanosinetriphosphate triphosphohydrolase-like protein 1 from Mesorhizobium japonicum (strain LMG 29417 / CECT 9101 / MAFF 303099) (Mesorhizobium loti (strain MAFF 303099)).